The primary structure comprises 414 residues: Hydroxysqualene dehydroxylase (414 aa).

Belongs to the HpnE family.

It carries out the reaction squalene + FAD + H2O + H(+) = hydroxysqualene + FADH2. It participates in secondary metabolite biosynthesis; hopanoid biosynthesis. Its function is as follows. Involved in the biosynthesis of the hopanoid precursor squalene (SQ) from farnesyl diphosphate (FPP). Catalyzes the third (last) step, the reduction of hydroxysqualene (HSQ) to SQ. The chain is Hydroxysqualene dehydroxylase from Zymomonas mobilis subsp. mobilis (strain ATCC 31821 / ZM4 / CP4).